A 347-amino-acid polypeptide reads, in one-letter code: Tetraacyldisaccharide 4'-kinase (347 aa).

ATP is bound at residue 64–71 (YVGGTGKT).

This sequence belongs to the LpxK family.

It catalyses the reaction a lipid A disaccharide + ATP = a lipid IVA + ADP + H(+). It functions in the pathway glycolipid biosynthesis; lipid IV(A) biosynthesis; lipid IV(A) from (3R)-3-hydroxytetradecanoyl-[acyl-carrier-protein] and UDP-N-acetyl-alpha-D-glucosamine: step 6/6. In terms of biological role, transfers the gamma-phosphate of ATP to the 4'-position of a tetraacyldisaccharide 1-phosphate intermediate (termed DS-1-P) to form tetraacyldisaccharide 1,4'-bis-phosphate (lipid IVA). This Bordetella bronchiseptica (strain ATCC BAA-588 / NCTC 13252 / RB50) (Alcaligenes bronchisepticus) protein is Tetraacyldisaccharide 4'-kinase.